Here is a 467-residue protein sequence, read N- to C-terminus: Probable lipase C1672.09 (467 aa).

Over 1 to 17 (MIQLPFIQRLKWEEYMA) the chain is Cytoplasmic. The helical; Signal-anchor for type II membrane protein transmembrane segment at 18–38 (LFLGFFFVIFEKLLSCLAFMI) threads the bilayer. At 39-467 (HNTLGLFYRS…NHIAPRNKPI (429 aa)) the chain is on the lumenal side. The residue at position 66 (Ser-66) is a Phosphoserine. Residues 127 to 421 (PVVYCHHGLL…SYEHLDMIWA (295 aa)) enclose the AB hydrolase-1 domain. Ser-222 (nucleophile) is an active-site residue. N-linked (GlcNAc...) asparagine glycosylation is found at Asn-311 and Asn-316. Catalysis depends on charge relay system residues Asp-389 and His-415. Over residues 440–457 (HHPPEHEENDKENREIQK) the composition is skewed to basic and acidic residues. Residues 440 to 467 (HHPPEHEENDKENREIQKNHIAPRNKPI) are disordered.

This sequence belongs to the AB hydrolase superfamily. Lipase family.

Its subcellular location is the cytoplasm. The protein resides in the membrane. In terms of biological role, probable lipase. The protein is Probable lipase C1672.09 of Schizosaccharomyces pombe (strain 972 / ATCC 24843) (Fission yeast).